The chain runs to 349 residues: Ureidoglycolate dehydrogenase (NAD(+)) (349 aa).

The active-site Proton acceptor is His-116. NAD(+) is bound by residues Ser-140, 174–176 (DMA), Lys-224, and 306–308 (GQD).

It belongs to the LDH2/MDH2 oxidoreductase family. In terms of assembly, homodimer.

Its subcellular location is the cytoplasm. The enzyme catalyses (S)-ureidoglycolate + NAD(+) = N-carbamoyl-2-oxoglycine + NADH + H(+). The protein operates within nitrogen metabolism; (S)-allantoin degradation; oxalurate from (S)-ureidoglycolate: step 1/1. AllD plays a pivotal role as a metabolic branch-point enzyme in nitrogen utilization via the assimilation of allantoin. It is able to utilize allantoin as a sole source of nitrogen under anaerobic conditions. Catalyzes the oxidation of ureidoglycolate to oxalurate. This chain is Ureidoglycolate dehydrogenase (NAD(+)), found in Escherichia coli (strain K12).